The chain runs to 596 residues: Bromodomain-containing protein 9 (596 aa).

Positions 1 to 10 (MGKKHKKHKA) are enriched in basic residues. Disordered stretches follow at residues 1–26 (MGKK…PLEK) and 38–137 (EVTE…AENE). Residues 50 to 62 (SYYDDRSDHERER) show a composition bias toward basic and acidic residues. Residue S56 is modified to Phosphoserine. The span at 63 to 73 (HREKKKKKKKK) shows a compositional bias: basic residues. Basic and acidic residues predominate over residues 74–85 (SEKEKHLDEEER). The segment covering 86 to 97 (RKRKEEKKRKRE) has biased composition (basic residues). Residues 111 to 126 (DPGKKVEVEPPPDRPV) show a composition bias toward basic and acidic residues. In terms of domain architecture, Bromo spans 136–240 (NESTPIQRLL…HAGFKMMSKA (105 aa)). The tract at residues 214 to 216 (TYN) is histone H4K5ac H4K8ac and histone H4K5bu H4K8bu binding. K372 carries the post-translational modification N6-acetyllysine; alternate. K372 participates in a covalent cross-link: Glycyl lysine isopeptide (Lys-Gly) (interchain with G-Cter in SUMO2); alternate. The interval 536–596 (AQAERGGSRP…SPEPAAPAKN (61 aa)) is disordered. A compositionally biased stretch (low complexity) spans 543–555 (SRPSSNLSSLSTA). S565 and S587 each carry phosphoserine.

As to quaternary structure, binds acetylated histones H3 and H4. Binds butyrylated histone H4. Component of the multiprotein chromatin-remodeling subcomplex SWI/SNF called GBAF, which includes at least BICRA or BICRAL (mutually exclusive), BRD9, SS18, the core BAF subunits, SMARCA2/BRM, SMARCA4/BRG1/BAF190A, ACTL6A/BAF53, SMARCC1/BAF155, and SMARCD1/BAF60A. Interacts (via N-terminal bromodomain) with acetylated RAD54. Interacts (via C-terminus) with RAD51.

Its subcellular location is the nucleus. In terms of biological role, plays a role in chromatin remodeling and regulation of transcription. Acts as a chromatin reader that recognizes and binds acylated histones: binds histones that are acetylated and/or butyrylated. Component of SWI/SNF chromatin remodeling subcomplex GBAF that carries out key enzymatic activities, changing chromatin structure by altering DNA-histone contacts within a nucleosome in an ATP-dependent manner. Also orchestrates the RAD51-RAD54 complex formation and thereby plays a role in homologous recombination (HR). This chain is Bromodomain-containing protein 9 (Brd9), found in Mus musculus (Mouse).